The chain runs to 553 residues: Mothers against decapentaplegic homolog 4 (553 aa).

Positions 1–323 (MDNMSITNTP…PISNHPAPEY (323 aa)) are mediates interaction with ZBTB7A. Positions 18 to 142 (SIVHSLMCHR…YERVVSPGID (125 aa)) constitute an MH1 domain. Position 37 is an N6-acetyllysine (Lys-37). Residues 44–69 (VKKLKEKKDELDSLITAITTNGAHPS) form a required for interaction with TSC22D1 region. Residue Cys-71 participates in Zn(2+) binding. Residue Lys-113 forms a Glycyl lysine isopeptide (Lys-Gly) (interchain with G-Cter in SUMO2) linkage. 3 residues coordinate Zn(2+): Cys-115, Cys-127, and His-132. A disordered region spans residues 168 to 194 (GQPSLSTEGHSIQTIQHPPSNRASTET). Residues 170–194 (PSLSTEGHSIQTIQHPPSNRASTET) are compositionally biased toward polar residues. Positions 275–321 (PYTPNLPHHQNGHLQHHPPMPPHPGHYWPPVHNELAFQPPISNHPAP) are SAD. In terms of domain architecture, MH2 spans 324–553 (WCSIAYFEMD…MPIADPQPLD (230 aa)). N6-acetyllysine is present on residues Lys-429 and Lys-508. Lys-520 is covalently cross-linked (Glycyl lysine isopeptide (Lys-Gly) (interchain with G-Cter in ubiquitin)).

It belongs to the dwarfin/SMAD family. In terms of assembly, monomer; in the absence of TGF-beta activation. Heterotrimer; on TGF-beta activation. Heterotrimer composed of two molecules of a C-terminally phosphorylated R-SMAD molecule, SMAD2 or SMAD3, and one molecule of SMAD4 to form the transcriptional active SMAD2/SMAD3-SMAD4 complex. Found in a ternary complex composed of SMAD4, STK11/LKB1 and STK11IP. Found in a complex with SMAD1 and YY1. Identified in a complex that contains at least ZNF451, SMAD2, SMAD3 and SMAD4. Interacts with ATF2, COPS5, DACH1, MSG1, SKI, STK11/LKB1, STK11IP and TRIM33. Associates with ZNF423 or ZNF521 in response to BMP2 leading to activate transcription of BMP target genes. Interacts with USP9X. Interacts with RBPMS. Interacts with WWTR1 (via coiled-coil domain). Interacts with CITED1 and CITED2. Interacts with PDPK1 (via PH domain). Interacts with VPS39; this interaction affects heterodimer formation with SMAD3, but not with SMAD2, and leads to inhibition of SMAD3-dependent transcription activation. Interactions with VPS39 and SMAD2 may be mutually exclusive. Interacts (via MH2 domain) with ZNF451 (via N-terminal zinc-finger domains). Interacts with ZC3H3. Interacts weakly with ZNF8. Interacts with NUP93 and IPO7; translocates SMAD4 to the nucleus through the NPC upon BMP7 stimulation resulting in activation of SMAD4 signaling. Interacts with CREB3L1, the interaction takes place upon TGFB1 induction and SMAD4 acts as a CREB3L1 coactivator to induce the expression of genes involved in the assembly of collagen extracellular matrix. Interacts with DLX1. Interacts with ZBTB7A; the interaction is direct and stimulated by TGFB1. Interacts with CREBBP; the recruitment of this transcriptional coactivator is negatively regulated by ZBTB7A. Interacts with EP300; the interaction with this transcriptional coactivator is negatively regulated by ZBTB7A. Interacts with HDAC1. Interacts (via MH2 domain) with ZMIZ1 (via SP-RING-type domain); in the TGF-beta signaling pathway increases the activity of the SMAD3/SMAD4 transcriptional complex. Interacts (via N-terminus) with TSC22D1. Monoubiquitinated on Lys-520 by E3 ubiquitin-protein ligase TRIM33. Monoubiquitination hampers its ability to form a stable complex with activated SMAD2/3 resulting in inhibition of TGF-beta/BMP signaling cascade. Post-translationally, phosphorylated by PDPK1.

The protein localises to the cytoplasm. It is found in the nucleus. Common SMAD (co-SMAD) is the coactivator and mediator of signal transduction by TGF-beta (transforming growth factor). Component of the heterotrimeric SMAD2/SMAD3-SMAD4 complex that forms in the nucleus and is required for the TGF-mediated signaling. Promotes binding of the SMAD2/SMAD4/FAST-1 complex to DNA and provides an activation function required for SMAD1 or SMAD2 to stimulate transcription. Component of the multimeric SMAD3/SMAD4/JUN/FOS complex which forms at the AP1 promoter site; required for synergistic transcriptional activity in response to TGF-beta. Acts synergistically with SMAD1 and YY1 in bone morphogenetic protein (BMP)-mediated cardiac-specific gene expression. Binds to SMAD binding elements (SBEs) (5'-GTCT/AGAC-3') within BMP response element (BMPRE) of cardiac activating regions. May act as a tumor suppressor. Positively regulates PDPK1 kinase activity by stimulating its dissociation from the 14-3-3 protein YWHAQ which acts as a negative regulator. In muscle physiology, plays a central role in the balance between atrophy and hypertrophy. When recruited by MSTN, promotes atrophy response via phosphorylated SMAD2/4. MSTN decrease causes SMAD4 release and subsequent recruitment by the BMP pathway to promote hypertrophy via phosphorylated SMAD1/5/8. This is Mothers against decapentaplegic homolog 4 (SMAD4) from Bos taurus (Bovine).